We begin with the raw amino-acid sequence, 214 residues long: GTP-binding nuclear protein GSP1/Ran (214 aa).

Residues 4 to 168 (EVPTFKLVLV…LWLARKLAGN (165 aa)) enclose the Small GTPase Ran-type domain. A GTP-binding site is contributed by 15–22 (DGGTGKTT). Positions 34–42 (KKYIATIGV) are switch-I. GTP contacts are provided by residues Gly-65, 119-122 (NKVD), and 147-149 (SAK). The segment at 65-81 (GQEKFGGLRDGYYINAQ) is switch-II.

The protein belongs to the small GTPase superfamily. Ran family. In terms of assembly, found in a nuclear export complex with RanGTP, exportin and pre-miRNA.

It localises to the nucleus. In terms of biological role, GTP-binding protein involved in nucleocytoplasmic transport. Required for the import of protein into the nucleus and also for RNA export. Involved in chromatin condensation and control of cell cycle. The polypeptide is GTP-binding nuclear protein GSP1/Ran (GSP1) (Candida glabrata (strain ATCC 2001 / BCRC 20586 / JCM 3761 / NBRC 0622 / NRRL Y-65 / CBS 138) (Yeast)).